A 295-amino-acid polypeptide reads, in one-letter code: Acetylglutamate kinase (295 aa).

Residues 66–67 (GG), R88, and N193 each bind substrate.

Belongs to the acetylglutamate kinase family. ArgB subfamily.

It is found in the cytoplasm. The enzyme catalyses N-acetyl-L-glutamate + ATP = N-acetyl-L-glutamyl 5-phosphate + ADP. Its pathway is amino-acid biosynthesis; L-arginine biosynthesis; N(2)-acetyl-L-ornithine from L-glutamate: step 2/4. Catalyzes the ATP-dependent phosphorylation of N-acetyl-L-glutamate. The chain is Acetylglutamate kinase from Rhizobium johnstonii (strain DSM 114642 / LMG 32736 / 3841) (Rhizobium leguminosarum bv. viciae).